A 348-amino-acid polypeptide reads, in one-letter code: 4-hydroxyphenylpyruvate dioxygenase (348 aa).

VOC domains lie at G11–S141 and A151–E303. Fe cation is bound by residues H154, H232, and E312.

The protein belongs to the 4HPPD family. The cofactor is Fe cation.

It carries out the reaction 3-(4-hydroxyphenyl)pyruvate + O2 = homogentisate + CO2. Its function is as follows. Catalyzes the transformation of p-hydroxyphenylpyruvate into HGA. Has hemolytic and brown pigment production activity. The sequence is that of 4-hydroxyphenylpyruvate dioxygenase (lly) from Legionella pneumophila (strain Corby).